Here is a 287-residue protein sequence, read N- to C-terminus: 4-hydroxybenzoate octaprenyltransferase (287 aa).

Helical transmembrane passes span 30-50, 92-112, 133-153, 158-178, 207-227, 232-252, and 266-286; these read ALWI…FALG, IAIA…LNGL, FFAI…PMAF, DTVP…SVAY, VLAI…LGAA, WPYW…YTLI, and HNNW…ALAV.

It belongs to the UbiA prenyltransferase family. Requires Mg(2+) as cofactor.

The protein resides in the cell inner membrane. The catalysed reaction is all-trans-octaprenyl diphosphate + 4-hydroxybenzoate = 4-hydroxy-3-(all-trans-octaprenyl)benzoate + diphosphate. It functions in the pathway cofactor biosynthesis; ubiquinone biosynthesis. In terms of biological role, catalyzes the prenylation of para-hydroxybenzoate (PHB) with an all-trans polyprenyl group. Mediates the second step in the final reaction sequence of ubiquinone-8 (UQ-8) biosynthesis, which is the condensation of the polyisoprenoid side chain with PHB, generating the first membrane-bound Q intermediate 3-octaprenyl-4-hydroxybenzoate. The polypeptide is 4-hydroxybenzoate octaprenyltransferase (Burkholderia mallei (strain NCTC 10247)).